A 325-amino-acid chain; its full sequence is Probable NADH kinase (325 aa).

This sequence belongs to the NAD kinase family. As to quaternary structure, homodimer.

The protein localises to the cytoplasm. It carries out the reaction NADH + ATP = ADP + NADPH + H(+). Its function is as follows. Key source of the cellular reductant NADPH which is an important antioxidant factor. The sequence is that of Probable NADH kinase from Oryza sativa subsp. japonica (Rice).